A 225-amino-acid polypeptide reads, in one-letter code: Adenosylcobinamide-GDP ribazoletransferase (225 aa).

5 helical membrane-spanning segments follow: residues 34–54, 93–113, 116–136, 165–185, and 204–224; these read FVGI…FWFL, NLGT…FYSF, VSAF…LLLL, PLLL…AITI, and VVGA…YFLA.

Belongs to the CobS family. Mg(2+) serves as cofactor.

The protein resides in the cell membrane. It catalyses the reaction alpha-ribazole + adenosylcob(III)inamide-GDP = adenosylcob(III)alamin + GMP + H(+). It carries out the reaction alpha-ribazole 5'-phosphate + adenosylcob(III)inamide-GDP = adenosylcob(III)alamin 5'-phosphate + GMP + H(+). The protein operates within cofactor biosynthesis; adenosylcobalamin biosynthesis; adenosylcobalamin from cob(II)yrinate a,c-diamide: step 7/7. Its function is as follows. Joins adenosylcobinamide-GDP and alpha-ribazole to generate adenosylcobalamin (Ado-cobalamin). Also synthesizes adenosylcobalamin 5'-phosphate from adenosylcobinamide-GDP and alpha-ribazole 5'-phosphate. The polypeptide is Adenosylcobinamide-GDP ribazoletransferase (cobS1) (Archaeoglobus fulgidus (strain ATCC 49558 / DSM 4304 / JCM 9628 / NBRC 100126 / VC-16)).